The primary structure comprises 436 residues: Eukaryotic peptide chain release factor subunit 1 (436 aa).

It belongs to the eukaryotic release factor 1 family. In terms of assembly, heterodimer of two subunits, one of which binds GTP.

It is found in the cytoplasm. Its function is as follows. Directs the termination of nascent peptide synthesis (translation) in response to the termination codons UAA and UAG. In B.musculus UGA codes for tryptophan. The protein is Eukaryotic peptide chain release factor subunit 1 (eRF1) of Blepharisma musculus.